A 385-amino-acid chain; its full sequence is Probable tRNA sulfurtransferase (385 aa).

Residues 57–160 form the THUMP domain; sequence DGVIERVKKV…RGNAYVFTDK (104 aa). Residues 180-181, 205-206, Arg-262, Gly-284, and Gln-293 contribute to the ATP site; these read ML and YY.

Belongs to the ThiI family.

The protein localises to the cytoplasm. The catalysed reaction is [ThiI sulfur-carrier protein]-S-sulfanyl-L-cysteine + a uridine in tRNA + 2 reduced [2Fe-2S]-[ferredoxin] + ATP + H(+) = [ThiI sulfur-carrier protein]-L-cysteine + a 4-thiouridine in tRNA + 2 oxidized [2Fe-2S]-[ferredoxin] + AMP + diphosphate. It catalyses the reaction [ThiS sulfur-carrier protein]-C-terminal Gly-Gly-AMP + S-sulfanyl-L-cysteinyl-[cysteine desulfurase] + AH2 = [ThiS sulfur-carrier protein]-C-terminal-Gly-aminoethanethioate + L-cysteinyl-[cysteine desulfurase] + A + AMP + 2 H(+). It participates in cofactor biosynthesis; thiamine diphosphate biosynthesis. Its function is as follows. Catalyzes the ATP-dependent transfer of a sulfur to tRNA to produce 4-thiouridine in position 8 of tRNAs, which functions as a near-UV photosensor. Also catalyzes the transfer of sulfur to the sulfur carrier protein ThiS, forming ThiS-thiocarboxylate. This is a step in the synthesis of thiazole, in the thiamine biosynthesis pathway. The sulfur is donated as persulfide by IscS. This chain is Probable tRNA sulfurtransferase, found in Clostridium perfringens (strain ATCC 13124 / DSM 756 / JCM 1290 / NCIMB 6125 / NCTC 8237 / Type A).